The sequence spans 270 residues: Aliphatic sulfonates import ATP-binding protein SsuB (270 aa).

Residues 17-238 (LASSGLRKTF…ARGSHRLAAL (222 aa)) form the ABC transporter domain. 49 to 56 (GRSGCGKS) provides a ligand contact to ATP. The segment at 249 to 270 (APGAAPEPDPVAPLPTQLRWAH) is disordered.

The protein belongs to the ABC transporter superfamily. Aliphatic sulfonates importer (TC 3.A.1.17.2) family. The complex is composed of two ATP-binding proteins (SsuB), two transmembrane proteins (SsuC) and a solute-binding protein (SsuA).

The protein localises to the cell inner membrane. The enzyme catalyses ATP + H2O + aliphatic sulfonate-[sulfonate-binding protein]Side 1 = ADP + phosphate + aliphatic sulfonateSide 2 + [sulfonate-binding protein]Side 1.. Functionally, part of the ABC transporter complex SsuABC involved in aliphatic sulfonates import. Responsible for energy coupling to the transport system. The protein is Aliphatic sulfonates import ATP-binding protein SsuB of Pseudomonas putida (Arthrobacter siderocapsulatus).